The chain runs to 212 residues: uncharacterized protein (212 aa).

Residues 1 to 18 form the signal peptide; that stretch reads MQLTQVLAVAILAAGVSA. The tract at residues 108–180 is disordered; it reads VSHNRVNAKQ…KDYGHKDYGH (73 aa). Residues 117 to 180 are compositionally biased toward basic and acidic residues; sequence QRRDDKKDYG…KDYGHKDYGH (64 aa). The interval 120–210 is 15 X 5 AA tandem repeats of K-D-Y-G-H; that stretch reads DDKKDYGKND…KDYGYKGYDD (91 aa). Repeat 1 spans residues 123 to 127; that stretch reads KDYGK. The 2; truncated repeat unit spans residues 128 to 132; sequence NDYGK. A run of 3 repeats spans residues 133 to 137, 138 to 142, and 143 to 147. Residues 148–152 form a 6; truncated repeat; it reads KEYDP. 5 consecutive repeat copies span residues 166-170, 171-175, 176-180, 181-185, and 186-190. The 12; truncated repeat unit spans residues 191–195; it reads DDYGY. A 13; truncated repeat occupies 196-200; the sequence is KGYDD. One copy of the 14; truncated repeat lies at 201–205; that stretch reads KDYGY. One copy of the 15; truncated repeat lies at 206-210; that stretch reads KGYDD.

It is found in the secreted. This is an uncharacterized protein from Arthroderma benhamiae (strain ATCC MYA-4681 / CBS 112371) (Trichophyton mentagrophytes).